The following is a 145-amino-acid chain: 3-hydroxyacyl-[acyl-carrier-protein] dehydratase FabZ (145 aa).

His-49 is a catalytic residue.

Belongs to the thioester dehydratase family. FabZ subfamily.

The protein localises to the cytoplasm. It carries out the reaction a (3R)-hydroxyacyl-[ACP] = a (2E)-enoyl-[ACP] + H2O. Functionally, involved in unsaturated fatty acids biosynthesis. Catalyzes the dehydration of short chain beta-hydroxyacyl-ACPs and long chain saturated and unsaturated beta-hydroxyacyl-ACPs. This chain is 3-hydroxyacyl-[acyl-carrier-protein] dehydratase FabZ, found in Rickettsia bellii (strain OSU 85-389).